Consider the following 132-residue polypeptide: Small ribosomal subunit protein uS9 (132 aa).

Positions 101-132 (KRAGLLTRDPRMKERKKPGLKAARRSPQFSKR) are disordered. Positions 113-132 (KERKKPGLKAARRSPQFSKR) are enriched in basic residues.

This sequence belongs to the universal ribosomal protein uS9 family.

This is Small ribosomal subunit protein uS9 from Staphylococcus aureus (strain USA300).